A 2628-amino-acid chain; its full sequence is MRKLNSLFSLAVLLSLLCWGQTAAAQGGPKTAPSVTHQAVQKGIRTSKVKDLRDPIPAGMARIILEAHDVWEDGTGYQMLWDADHNQYGASIPEESFWFANGTIPAGLYDPFEYKVPVNADASFSPTNFVLDGTASADIPAGTYDYVIINPNPGIIYIVGEGVSKGNDYVVEAGKTYHFTVQRQGPGDAASVVVTGEGGNEFAPVQNLQWSVSGQTVTLTWQAPASDKRTYVLNESFDTQTLPNGWTMIDADGDGHNWLSTINVYNTATHTGDGAMFSKSWTASGGAKIDLSPDNYLVTPKVTVPENGKLSYWVSSQVPWTNEHYGVFLSTTGNEAANFTIKLLEETLGSDKPAPMNLVKSEGVKLPAPYQERTIDLSAYAGQQVYLAFRHFNSTGIFRLYLDDVAVSGEGSSNDYTYTVYRDNVVIAQNLAATTFNQENVAPGQYNYCVEVKYTAGVSPKVCKDVTVEGSNEFAHVQNLTGSAVGQKVTLKWDAPNGTPNPNPGTTTLSESFENGIPASWKTIDADGDGNNWTTTPPPGGTSFAGHNSAICASSASYINFEGPQNPDNYLVTPELSLPNGGTLTFWVCAQDANYASEHYAVYASSTGNDASNFANALLEEVLTAKTVVTAPEAIRGTRVQGTWYQKTVQLPAGTKYVAFRHFGCTDFFWINLDDVEIKANGKRADFTETFESSTHGEAPAEWTTIDADGDGQGWLCLSSGQLDWLTAHGGTNVVASFSWNGMALNPDNYLISKDVTGATKVKYYYAVNDGFPGDHYAVMISKTGTNAGDFTVVFEETPNGINKGGARFGLSTEADGAKPQSVWIERTVDLPAGTKYVAFRHYNCSDLNYILLDDIQFTMGGSPTPTDYTYTVYRDGTKIKEGLTETTFEEDGVATGNHEYCVEVKYTAGVSPKECVNVTVDPVQFNPVQNLTGSAVGQKVTLKWDAPNGTPNPNPNPNPGTTTLSESFENGIPASWKTIDADGDGNNWTTTPPPGGTSFAGHNSAICASSASYINFEGPQNPDNYLVTPELSLPNGGTLTFWVCAQDANYASEHYAVYASSTGNDASNFANALLEEVLTAKTVVTAPEAIRGTRVQGTWYQKTVQLPAGTKYVAFRHFGCTDFFWINLDDVEIKANGKRADFTETFESSTHGEAPAEWTTIDADGDGQGWLCLSSGQLGWLTAHGGTNVVASFSWNGMALNPDNYLISKDVTGATKVKYYYAVNDGFPGDHYAVMISKTGTNAGDFTVVFEETPNGINKGGARFGLSTEADGAKPQSVWIERTVDLPAGTKYVAFRHYNCSDLNYILLDDIQFTMGGSPTPTDYTYTVYRDGTKIKEGLTETTFEEDGVATGNHEYCVEVKYTAGVSPKECVNVTVDPVQFNPVQNLTGSAVGQKVTLKWDAPNGTPNPNPNPNPGTTTLSESFENGIPASWKTIDADGDGNNWTTTPPPGGTSFAGHNSAICASSASYINFEGPQNPDNYLVTPELSLPNGGTLTFWVCAQDANYASEHYAVYASSTGNDASNFANALLEEVLTAKTVVTAPEAIRGTRVQGTWYQKTVQLPAGTKYVAFRHFGCTDFFWINLDDVEIKANGKRADFTETFESSTHGEAPAEWTTIDADGDGQGWLCLSSGQLGWLTAHGGTNVVASFSWNGMALNPDNYLISKDVTGATKVKYYYAVNDGFPGDHYAVMISKTGTNAGDFTVVFEETPNGINKGGARFGLSTEADGAKPQSVWIERTVDLPAGTKYVAFRHYNCSDLNYILLDDIQFTMGGSPTPTDYTYTVYRDGTKIKEGLTETTFEEDGVATGNHEYCVEVKYTAGVSPKECVNVTVDPVQFNPVQNLTGSAVGQKVTLKWDAPNGTPNPNPNPNPGTTTLSESFENGIPASWKTIDADGDGNNWTTTPPPGGTSFAGHNSAICVSSASYINFEGPQNPDNYLVTPELSLPGGGTLTFWVCAQDANYASEHYAVYASSTGNDASNFANALLEEVLTAKTVVTAPEAIRGTRVQGTWYQKTVQLPAGTKYVAFRHFGCTDFFWINLDEVEIKANGKRADFTETFESSTHGEAPAEWTTIDADGDGQGWLCLSSGQLDWLTAHGGTNVVASFSWNGMALNPDNYLISKDVTGATKVKYYYAVNDGFPGDHYAVMISKTGTNAGDFTVVFEETPNGINKGGARFGLSTEADGAKPQSVWIERTVDLPAGTKYVAFRHYNCSDLNYILLDDIQFTMGGSPTPTDYTYTVYRDGTKIKEGLTETTFEEDGVATGNHEYCVEVKYTAGVSPKVCVNVTINPTQFNPVQNLTAEQAPNSMDAILKWNAPASKRAEVLNEDFENGIPSSWKTIDADGDGNNWTTTPPPGGSSFAGHNSAICVSSASYINFEGPQNPDNYLVTPELSLPGGGTLTFWVCAQDANYASEHYAVYASSTGNDASNFANALLEEVLTAKTVVTAPEAIRGTRVQGTWYQKTVQLPAGTKYVAFRHFGCTDFFWINLDDVVITSGNAPSYTYTIYRNNTQIASGVTETTYRDPDLATGFYTYGVKVVYPNGESAIETATLNITSLADVTAQKPYTLTVVGKTITVTCQGEAMIYDMNGRRLAAGRNTVVYTAQGGHYAVMVVVDGKSYVEKLAVK.

The signal sequence occupies residues 1–24 (MRKLNSLFSLAVLLSLLCWGQTAA). Peptidase C25-like regions lie at residues 25–539 (AQGG…TPPP), 540–995 (GGTS…TPPP), 996–1451 (GGTS…TPPP), 1452–1907 (GGTS…TPPP), and 2074–2628 (IDAD…LAVK). Disordered regions lie at residues 493-512 (WDAP…LSES), 520-546 (SWKT…SFAG), 944-1002 (KWDA…SFAG), 1400-1458 (KWDA…SFAG), 1856-1881 (KWDA…SESF), 1890-1909 (KTID…PPGG), and 2336-2358 (SSWK…PPGG). Positions 496 to 508 (PNGTPNPNPGTTT) are enriched in low complexity.

Belongs to the peptidase C25 family.

In terms of biological role, agglutinates erythrocytes. This Porphyromonas gingivalis (Bacteroides gingivalis) protein is Hemagglutinin A (hagA).